The primary structure comprises 153 residues: Superoxide dismutase [Cu-Zn] (153 aa).

The Cu cation site is built by histidine 46, histidine 48, and histidine 63. Residues cysteine 57 and cysteine 146 are joined by a disulfide bond. Zn(2+) contacts are provided by histidine 63, histidine 71, histidine 80, and aspartate 83. Histidine 120 is a Cu cation binding site.

This sequence belongs to the Cu-Zn superoxide dismutase family. Homodimer. Cu cation serves as cofactor. Zn(2+) is required as a cofactor.

The protein resides in the cytoplasm. The catalysed reaction is 2 superoxide + 2 H(+) = H2O2 + O2. Its function is as follows. Destroys radicals which are normally produced within the cells and which are toxic to biological systems. This is Superoxide dismutase [Cu-Zn] (SODCC) from Solidago canadensis var. scabra (Tall goldenrod).